A 261-amino-acid polypeptide reads, in one-letter code: Triosephosphate isomerase (261 aa).

10-12 (NWK) serves as a coordination point for substrate. The active-site Electrophile is the His100. Glu172 serves as the catalytic Proton acceptor. Residues Gly178, Ser218, and 239-240 (GG) contribute to the substrate site.

It belongs to the triosephosphate isomerase family. As to quaternary structure, homodimer.

Its subcellular location is the cytoplasm. It carries out the reaction D-glyceraldehyde 3-phosphate = dihydroxyacetone phosphate. It functions in the pathway carbohydrate biosynthesis; gluconeogenesis. Its pathway is carbohydrate degradation; glycolysis; D-glyceraldehyde 3-phosphate from glycerone phosphate: step 1/1. Involved in the gluconeogenesis. Catalyzes stereospecifically the conversion of dihydroxyacetone phosphate (DHAP) to D-glyceraldehyde-3-phosphate (G3P). This Mycobacterium tuberculosis (strain CDC 1551 / Oshkosh) protein is Triosephosphate isomerase.